The chain runs to 202 residues: Superoxide dismutase [Fe] (202 aa).

Residues H27, H82, D164, and H168 each contribute to the Fe cation site.

Belongs to the iron/manganese superoxide dismutase family. As to quaternary structure, homodimer. Fe cation is required as a cofactor.

It carries out the reaction 2 superoxide + 2 H(+) = H2O2 + O2. Destroys superoxide anion radicals which are normally produced within the cells and which are toxic to biological systems. This chain is Superoxide dismutase [Fe] (sodA), found in Enterococcus faecalis (strain ATCC 700802 / V583).